Here is a 539-residue protein sequence, read N- to C-terminus: MLCVKGPPEQEPEDGALDVTRGCQCPLPTEDSILGQELLDCTRMNEDQSTDENGAGHFYSESPSQLREYLTQPSSEQTSSSESTVTSSESGSDILHMASGDLDCKPLCEKEEEARAASAMQGTSLAPAAYGDYTSVGVAKAASQLEAGEELRTTENGGKGSAPGETEISMPPKASVKLVNFQQSENTSANEKEVEAEFLRLSLGLKCDWFTLEKRVKLEERSRDLAEENLKKEITNCLKLLESLTPLCEEDNQAQEIVKKLEKSIVLLSQCTARVASRAEMLGAINQESRVSRAVEVMIQHVENLKRMYAKEHAELEDLKQALLQNDRSFNSLPDEDDCQIKKRSSSLNSKPSSLRRVTIASLPRNLGNVGLVSGMENNDRFSRRSSSWRILGTKQGEHRPSLHRFISTYSWADAEDERSDVKARDAPEPQGEEAVERTRKPSLSERRSSTLAWDRGTICSSVASWVTHLQASFRRANRALWLTGLIIILIAALMSFLTGQLFQTAVEAAPTQEGDSWLSLEHILWPFTRLGHDGPPPV.

Disordered stretches follow at residues 1-21 (MLCVKGPPEQEPEDGALDVTR), 69-98 (YLTQPSSEQTSSSESTVTSSESGSDILHMA), and 147-171 (AGEELRTTENGGKGSAPGETEISMP). Topologically, residues 1–479 (MLCVKGPPEQ…LQASFRRANR (479 aa)) are cytoplasmic. The span at 74 to 92 (SSEQTSSSESTVTSSESGS) shows a compositional bias: low complexity. T78 is modified (phosphothreonine). Residues 298–326 (MIQHVENLKRMYAKEHAELEDLKQALLQN) are a coiled coil. The tract at residues 334–353 (PDEDDCQIKKRSSSLNSKPS) is disordered. A phosphoserine mark is found at S347, S354, and S408. Residues 418-449 (ERSDVKARDAPEPQGEEAVERTRKPSLSERRS) form a disordered region. The segment covering 435-449 (AVERTRKPSLSERRS) has biased composition (basic and acidic residues). A helical; Anchor for type IV membrane protein transmembrane segment spans residues 480-500 (ALWLTGLIIILIAALMSFLTG). The Lumenal portion of the chain corresponds to 501–539 (QLFQTAVEAAPTQEGDSWLSLEHILWPFTRLGHDGPPPV).

Belongs to the IRAG2 family. In terms of assembly, interacts (via coiled-coil domain) with ITPR3. Interacts with SUN1 and SUN2. Interacts with microtubules. Interacts with HCN4; regulates HCN4 channel activity. The removal of the C-terminal lumenal domain occurs by proteolytic processing. In terms of tissue distribution, spleen and thymus. Expressed at high levels in pre B-cells, mature B-cells and pre T-cells. Expressed at low levels in mature T-cells and plasma B-cells. Expressed in circumvallate (CV), foliate (FL) and fungiform (FF) taste papillae cells of the tongue epithelium.

The protein localises to the cytoplasm. Its subcellular location is the endoplasmic reticulum membrane. It is found in the nucleus envelope. It localises to the cytoskeleton. The protein resides in the microtubule organizing center. The protein localises to the centrosome. Its subcellular location is the spindle pole. It is found in the chromosome. Its function is as follows. Plays a role in the delivery of peptides to major histocompatibility complex (MHC) class I molecules; this occurs in a transporter associated with antigen processing (TAP)-independent manner. May play a role in taste signal transduction via ITPR3. May play a role during fertilization in pronucleus congression and fusion. Plays a role in maintaining nuclear shape, maybe as a component of the LINC complex and through interaction with microtubules. Plays a role in the regulation of cellular excitability by regulating the hyperpolarization-activated cyclic nucleotide-gated HCN4 channel activity. The chain is Inositol 1,4,5-triphosphate receptor associated 2 (Irag2) from Mus musculus (Mouse).